A 31-amino-acid polypeptide reads, in one-letter code: Antifungal protein 1 (31 aa).

2 stretches are compositionally biased toward basic and acidic residues: residues 1–10 (PGAGSQEERM) and 18–31 (DFSH…MVRE). The segment at 1–31 (PGAGSQEERMQGQMEGQDFSHEERFLSMVRE) is disordered.

As to quaternary structure, heterodimer; disulfide-linked. Disulfide bonds.

In terms of biological role, has antifungal activity against C.gloeosporioides but not against B.cinerea and Fusarium sp. or against various yeasts. Has no antibacterial activity. The sequence is that of Antifungal protein 1 from Passiflora alata (Winged-stem passion flower).